Reading from the N-terminus, the 148-residue chain is SsrA-binding protein (148 aa).

Belongs to the SmpB family.

The protein resides in the cytoplasm. In terms of biological role, required for rescue of stalled ribosomes mediated by trans-translation. Binds to transfer-messenger RNA (tmRNA), required for stable association of tmRNA with ribosomes. tmRNA and SmpB together mimic tRNA shape, replacing the anticodon stem-loop with SmpB. tmRNA is encoded by the ssrA gene; the 2 termini fold to resemble tRNA(Ala) and it encodes a 'tag peptide', a short internal open reading frame. During trans-translation Ala-aminoacylated tmRNA acts like a tRNA, entering the A-site of stalled ribosomes, displacing the stalled mRNA. The ribosome then switches to translate the ORF on the tmRNA; the nascent peptide is terminated with the 'tag peptide' encoded by the tmRNA and targeted for degradation. The ribosome is freed to recommence translation, which seems to be the essential function of trans-translation. The sequence is that of SsrA-binding protein from Ehrlichia ruminantium (strain Gardel).